The sequence spans 120 residues: Aspartate 1-decarboxylase (120 aa).

Ser-25 (schiff-base intermediate with substrate; via pyruvic acid) is an active-site residue. Position 25 is a pyruvic acid (Ser) (Ser-25). Thr-57 is a binding site for substrate. Tyr-58 serves as the catalytic Proton donor. Residue 73-75 (GAA) participates in substrate binding.

Belongs to the PanD family. Heterooctamer of four alpha and four beta subunits. Pyruvate is required as a cofactor. In terms of processing, is synthesized initially as an inactive proenzyme, which is activated by self-cleavage at a specific serine bond to produce a beta-subunit with a hydroxyl group at its C-terminus and an alpha-subunit with a pyruvoyl group at its N-terminus.

The protein resides in the cytoplasm. It carries out the reaction L-aspartate + H(+) = beta-alanine + CO2. Its pathway is cofactor biosynthesis; (R)-pantothenate biosynthesis; beta-alanine from L-aspartate: step 1/1. In terms of biological role, catalyzes the pyruvoyl-dependent decarboxylation of aspartate to produce beta-alanine. This chain is Aspartate 1-decarboxylase, found in Ralstonia pickettii (strain 12J).